We begin with the raw amino-acid sequence, 64 residues long: Small, acid-soluble spore protein D (64 aa).

It belongs to the alpha/beta-type SASP family.

Functionally, SASP are bound to spore DNA. They are double-stranded DNA-binding proteins that cause DNA to change to an a-like conformation. They protect the DNA backbone from chemical and enzymatic cleavage and are thus involved in dormant spore's high resistance to UV light. This chain is Small, acid-soluble spore protein D (sspD), found in Bacillus subtilis (strain 168).